The chain runs to 394 residues: MLSENTINIVKSTAPLLAETGPKLTAHFYQRMFEHNPELKDIFNMSNQRNGDQREALFNAICAYASNIDNLPALLGAVEKIAHKHSSFLITADQYQIVGGHLLATIDELFSPGQAVLDAWAEAYGVLANVFIQREEQIYQDNQSQTGGWRGLREFELVEKQYESAHICSFVFKPVDGGSVVSFKPGQYLGIYINDEQFENQEIRQYSLSSSVRPDCYRISVKREEGGRVSNYLHDHLDVGSKVKLAAPAGDFFLDAAPTAPVVLISAGVGLTPTLSMLESLTEHQAPVTWIHATENGQQHAFKQHVKQLVETHPHFNSLVWYNQPNSDDKIGDDFQFSGWVNLHEIETVLKQADVQVYFCGPVGFMQFIAKQLLEMGVPEQQFHYECFGPHKVV.

The region spanning 1-136 is the Globin domain; the sequence is MLSENTINIV…LANVFIQREE (136 aa). His-85 lines the heme b pocket. Residues Tyr-95 and Glu-135 each act as charge relay system in the active site. Residues 147 to 394 are reductase; sequence GGWRGLREFE…YECFGPHKVV (248 aa). Residues 150–255 enclose the FAD-binding FR-type domain; sequence RGLREFELVE…AAPAGDFFLD (106 aa). Residues Tyr-188 and 204–207 each bind FAD; that span reads RQYS. 268-273 is a binding site for NADP(+); it reads GVGLTP. 387–390 provides a ligand contact to FAD; that stretch reads CFGP.

It belongs to the globin family. Two-domain flavohemoproteins subfamily. The protein in the C-terminal section; belongs to the flavoprotein pyridine nucleotide cytochrome reductase family. The cofactor is heme b. Requires FAD as cofactor.

The enzyme catalyses 2 nitric oxide + NADPH + 2 O2 = 2 nitrate + NADP(+) + H(+). It carries out the reaction 2 nitric oxide + NADH + 2 O2 = 2 nitrate + NAD(+) + H(+). Functionally, is involved in NO detoxification in an aerobic process, termed nitric oxide dioxygenase (NOD) reaction that utilizes O(2) and NAD(P)H to convert NO to nitrate, which protects the bacterium from various noxious nitrogen compounds. Therefore, plays a central role in the inducible response to nitrosative stress. This chain is Flavohemoprotein, found in Vibrio vulnificus (strain CMCP6).